The following is a 277-amino-acid chain: Small ribosomal subunit protein uS3 (277 aa).

The KH type-2 domain occupies Ile-43–Lys-111. Positions Phe-216–Glu-277 are disordered. Residues Glu-264–Glu-277 are compositionally biased toward basic and acidic residues.

The protein belongs to the universal ribosomal protein uS3 family. Part of the 30S ribosomal subunit. Forms a tight complex with proteins S10 and S14.

In terms of biological role, binds the lower part of the 30S subunit head. Binds mRNA in the 70S ribosome, positioning it for translation. The protein is Small ribosomal subunit protein uS3 of Bifidobacterium animalis subsp. lactis (strain AD011).